The sequence spans 295 residues: Methionine aminopeptidase (295 aa).

H62 contacts substrate. The a divalent metal cation site is built by D82, D93, and H153. H161 is a substrate binding site. A divalent metal cation-binding residues include E187 and E280.

In terms of assembly, monomer. Co(2+) serves as cofactor. Requires Zn(2+) as cofactor. The cofactor is Mn(2+). Fe(2+) is required as a cofactor.

The enzyme catalyses Release of N-terminal amino acids, preferentially methionine, from peptides and arylamides.. Functionally, removes the N-terminal methionine from nascent proteins. The N-terminal methionine is often cleaved when the second residue in the primary sequence is small and uncharged (Met-Ala-, Cys, Gly, Pro, Ser, Thr, or Val). This is Methionine aminopeptidase from Pyrococcus furiosus (strain ATCC 43587 / DSM 3638 / JCM 8422 / Vc1).